Reading from the N-terminus, the 458-residue chain is Phosphoglucosamine mutase (458 aa).

The Phosphoserine intermediate role is filled by Ser-100. Residues Ser-100, Asp-254, Asp-256, and Asp-258 each contribute to the Mg(2+) site. Ser-100 is modified (phosphoserine).

Belongs to the phosphohexose mutase family. The cofactor is Mg(2+). Activated by phosphorylation.

It carries out the reaction alpha-D-glucosamine 1-phosphate = D-glucosamine 6-phosphate. In terms of biological role, catalyzes the conversion of glucosamine-6-phosphate to glucosamine-1-phosphate. The polypeptide is Phosphoglucosamine mutase (Nocardia farcinica (strain IFM 10152)).